The primary structure comprises 117 residues: Immunoglobulin heavy variable 1-3 (117 aa).

Positions 1-19 (MDWTWRILFLVAAATGAHS) are cleaved as a signal peptide. The interval 20–44 (QVQLVQSGAEVKKPGASVKVSCKAS) is framework-1. Residues 20 to 117 (QVQLVQSGAE…EDTAVYYCAR (98 aa)) enclose the Ig-like domain. A disulfide bond links C41 and C115. The complementarity-determining-1 stretch occupies residues 45 to 52 (GYTFTSYA). The segment at 53-69 (MHWVRQAPGQRLEWMGW) is framework-2. Residues 70–77 (INAGNGNT) form a complementarity-determining-2 region. A framework-3 region spans residues 78-115 (KYSQKFQGRVTITRDTSASTAYMELSSLRSEDTAVYYC). The interval 116–117 (AR) is complementarity-determining-3.

Immunoglobulins are composed of two identical heavy chains and two identical light chains; disulfide-linked.

It is found in the secreted. It localises to the cell membrane. Functionally, v region of the variable domain of immunoglobulin heavy chains that participates in the antigen recognition. Immunoglobulins, also known as antibodies, are membrane-bound or secreted glycoproteins produced by B lymphocytes. In the recognition phase of humoral immunity, the membrane-bound immunoglobulins serve as receptors which, upon binding of a specific antigen, trigger the clonal expansion and differentiation of B lymphocytes into immunoglobulins-secreting plasma cells. Secreted immunoglobulins mediate the effector phase of humoral immunity, which results in the elimination of bound antigens. The antigen binding site is formed by the variable domain of one heavy chain, together with that of its associated light chain. Thus, each immunoglobulin has two antigen binding sites with remarkable affinity for a particular antigen. The variable domains are assembled by a process called V-(D)-J rearrangement and can then be subjected to somatic hypermutations which, after exposure to antigen and selection, allow affinity maturation for a particular antigen. This Homo sapiens (Human) protein is Immunoglobulin heavy variable 1-3.